The chain runs to 159 residues: Small ribosomal subunit protein uS7 (159 aa).

It belongs to the universal ribosomal protein uS7 family. As to quaternary structure, part of the 30S ribosomal subunit. Contacts proteins S9 and S11.

One of the primary rRNA binding proteins, it binds directly to 16S rRNA where it nucleates assembly of the head domain of the 30S subunit. Is located at the subunit interface close to the decoding center, probably blocks exit of the E-site tRNA. The chain is Small ribosomal subunit protein uS7 from Endomicrobium trichonymphae.